Consider the following 168-residue polypeptide: Photosystem I assembly protein Ycf3 (168 aa).

TPR repeat units lie at residues A35–P68, S72–L105, and G120–N153.

This sequence belongs to the Ycf3 family.

It is found in the plastid. The protein localises to the chloroplast thylakoid membrane. Essential for the assembly of the photosystem I (PSI) complex. May act as a chaperone-like factor to guide the assembly of the PSI subunits. The sequence is that of Photosystem I assembly protein Ycf3 from Plantago lanceolata (English plantain).